Here is a 714-residue protein sequence, read N- to C-terminus: MEMASAFTLNVRLDNIAIITIDVPDEKMNTLKAEFASQVRAIIKQLRENKELRGVVFISAKPDNFIAGADINMIGNCKTAQEAEALARQGQQLMAEIHALPIPVIAAIHGACLGGGLELALACHGRVCTDDPKTVLGLPEVQLGLLPGSGGTQRLPRLIGVSTALEMILTGKQLRAKQALKLGLVDDVVPHSILLEAAVELAKKDRPSSRPLPVRERILAGPLGRALLFKMVGKKTEHKTQGNYPATERILEVVETGLAQGTSSGYDAEARAFGELAMTPQSQALRSIFFASTDVKKDPGSDAPPAPLNSVGILGGGLMGGGIAYVTACKAGLPVRIKDINPQGINHALKYSWDQLEGKVRRRHLKASERDKQLALISGTTDYRGFAHRDLIIEAVFENLELKQQMVAEVEQNCAAHTIFASNTSSLPIGDIAAHAARPEQVIGLHFFSPVEKMPLVEIIPHAGTSAQTIATTVKLAKKQGKTPIVVRDKAGFYVNRILAPYINEAIRMLTEGERVEHIDAALVKFGFPVGPIQLLDEVGIDTGTKIIPVLEAAYGERFSAPANVVSSILNDDRKGRKNGRGFYLYGQKGRKSKKQVDPAIYPLIGAQGQGRLSAPQVAERCVMLMLNEAVRCVDEQVIRSVRDGDIGAVFGIGFPPFLGGPFRYIDSLGAGEVVAIMQRLATQYGSRFTPCERLVEMGARGESFWKTTATDLQ.

An enoyl-CoA hydratase region spans residues 1-190; that stretch reads MEMASAFTLN…KLGLVDDVVP (190 aa). Residues 306 to 714 form a 3-hydroxyacyl-CoA dehydrogenase region; sequence APLNSVGILG…FWKTTATDLQ (409 aa).

The protein in the N-terminal section; belongs to the enoyl-CoA hydratase/isomerase family. In the central section; belongs to the 3-hydroxyacyl-CoA dehydrogenase family. Heterotetramer of two alpha chains (FadJ) and two beta chains (FadI).

It localises to the cytoplasm. The catalysed reaction is a (3S)-3-hydroxyacyl-CoA = a (2E)-enoyl-CoA + H2O. It catalyses the reaction a 4-saturated-(3S)-3-hydroxyacyl-CoA = a (3E)-enoyl-CoA + H2O. It carries out the reaction a (3S)-3-hydroxyacyl-CoA + NAD(+) = a 3-oxoacyl-CoA + NADH + H(+). The enzyme catalyses (3S)-3-hydroxybutanoyl-CoA = (3R)-3-hydroxybutanoyl-CoA. The protein operates within lipid metabolism; fatty acid beta-oxidation. In terms of biological role, catalyzes the formation of a hydroxyacyl-CoA by addition of water on enoyl-CoA. Also exhibits 3-hydroxyacyl-CoA epimerase and 3-hydroxyacyl-CoA dehydrogenase activities. The chain is Fatty acid oxidation complex subunit alpha from Shigella flexneri.